Here is a 500-residue protein sequence, read N- to C-terminus: Coiled-coil domain-containing protein 85A (500 aa).

Residues Met1–Ser23 show a composition bias toward low complexity. Residues Met1 to Asp30 are disordered. 2 coiled-coil regions span residues Glu38 to Cys104 and Met132 to Lys171. 2 disordered regions span residues Arg200–Asn405 and Asn426–Pro465. A compositionally biased stretch (low complexity) spans Asp204–Asp215. The segment covering His231–Leu254 has biased composition (basic and acidic residues). The span at Gly372–Arg381 shows a compositional bias: gly residues. The segment covering Gly383 to Ser395 has biased composition (basic and acidic residues). Positions Met404 to Leu429 form a coiled coil. Over residues Phe434–Pro463 the composition is skewed to polar residues. Position 488 is an asymmetric dimethylarginine (Arg488).

Belongs to the CCDC85 family. As to quaternary structure, may interact with ARVCF; CTNND1; CTNND2 and PKP4.

It localises to the cell junction. Its subcellular location is the adherens junction. Its function is as follows. May play a role in cell-cell adhesion and epithelium development through its interaction with proteins of the beta-catenin family. The sequence is that of Coiled-coil domain-containing protein 85A (Ccdc85a) from Mus musculus (Mouse).